A 299-amino-acid polypeptide reads, in one-letter code: Regucalcin (299 aa).

Glu-18 contacts a divalent metal cation. The substrate site is built by Arg-101, Asn-103, and Glu-121. Lys-144 is subject to N6-succinyllysine. A divalent metal cation-binding residues include Asn-154 and Asp-204. Residue Asp-204 is the Proton donor/acceptor of the active site. N6-succinyllysine is present on residues Lys-244 and Lys-253.

This sequence belongs to the SMP-30/CGR1 family. As to quaternary structure, monomer. The cofactor is Zn(2+). Mn(2+) serves as cofactor. Requires Ca(2+) as cofactor. Mg(2+) is required as a cofactor.

It is found in the cytoplasm. The enzyme catalyses D-glucono-1,5-lactone + H2O = D-gluconate + H(+). Functionally, gluconolactonase with low activity towards other sugar lactones, including gulonolactone and galactonolactone. Can also hydrolyze diisopropyl phosphorofluoridate and phenylacetate (in vitro). Calcium-binding protein. Modulates Ca(2+) signaling, and Ca(2+)-dependent cellular processes and enzyme activities. This Pongo abelii (Sumatran orangutan) protein is Regucalcin (RGN).